A 355-amino-acid chain; its full sequence is uncharacterized protein (355 aa).

Cys2 serves as the catalytic For GATase activity. Residues 2-248 (CELLGICFNK…NGELMVFKNG (247 aa)) enclose the Glutamine amidotransferase type-2 domain.

This is an uncharacterized protein from Methanocaldococcus jannaschii (strain ATCC 43067 / DSM 2661 / JAL-1 / JCM 10045 / NBRC 100440) (Methanococcus jannaschii).